Reading from the N-terminus, the 243-residue chain is Small ribosomal subunit protein uS3 (243 aa).

Ala-2 bears the N-acetylalanine mark. Ser-6 is subject to Phosphoserine; by PKC/PRKCD. In terms of domain architecture, KH type-2 spans 21–92 (LNEFLTRELA…SVELYAEKVA (72 aa)). Ser-35 carries the post-translational modification Phosphoserine. Thr-42 is subject to Phosphothreonine; by MAPK. Lys-62 is subject to N6-acetyllysine. Arg-64, Arg-65, and Arg-67 each carry asymmetric dimethylarginine; by PRMT1. Residue Thr-70 is modified to Phosphothreonine; by PKB. Lys-90 is covalently cross-linked (Glycyl lysine isopeptide (Lys-Gly) (interchain with G-Cter in ubiquitin)). A Phosphoserine modification is found at Ser-104. Lys-132 bears the N6-succinyllysine mark. A Glycyl lysine isopeptide (Lys-Gly) (interchain with G-Cter in ubiquitin) cross-link involves residue Lys-202. Ser-209 bears the Phosphoserine; by IKKB mark. Lys-214 is covalently cross-linked (Glycyl lysine isopeptide (Lys-Gly) (interchain with G-Cter in SUMO2); alternate). Lys-214 participates in a covalent cross-link: Glycyl lysine isopeptide (Lys-Gly) (interchain with G-Cter in ubiquitin); alternate. The tract at residues 214–243 (KDEILPTTPISEQKGGKPEPPAMPQPVPTA) is disordered. Thr-220 bears the Phosphothreonine mark. A Phosphothreonine; by CDK1 and PKC/PRKCD modification is found at Thr-221. Ser-224 bears the Phosphoserine mark. Residue Lys-230 forms a Glycyl lysine isopeptide (Lys-Gly) (interchain with G-Cter in SUMO2) linkage. Pro residues predominate over residues 231–243 (PEPPAMPQPVPTA). Phosphothreonine is present on Thr-242.

This sequence belongs to the universal ribosomal protein uS3 family. In terms of assembly, component of the 40S small ribosomal subunit. Identified in a IGF2BP1-dependent mRNP granule complex containing untranslated mRNAs. Interacts with HNRPD. Interacts with PRMT1; the interaction methylates RPS3. Interacts with SUMO1; the interaction sumoylates RPS3. Interacts with UBC9. Interacts with CDK1; the interaction phosphorylates RPS3. Interacts with PRKCD; the interaction phosphorylates RPS3. Interacts with PKB/AKT; the interaction phosphorylates RPS3. Interacts with E2F1; the interaction occurs in the absence of nerve growth factor and increases transcription of pro-apoptotic proteins BCL2L11/BIM and HRK/Dp5. Interacts with the base excision repair proteins APEX1 and OGG1; interaction with OGG1 increases OGG1 N-glycosylase activity. Interacts with UNG; the interaction increases the uracil excision activity of UNG1. Interacts with HSP90; the interaction prevents the ubiquitination and proteasome-dependent degradation of RPS3 and is suppressed by increased ROS levels. Interacts with TOM70; the interaction promotes translocation of RPS3 to the mitochondrion. Interacts (via N-terminus) with RELA (via N-terminus); the interaction enhances the DNA-binding activity of the NF-kappa-B p65-p50 complex. Interacts with NFKBIA; the interaction is direct and may bridge the interaction between RPS3 and RELA. Interacts with IKKB; the interaction phosphorylates RPS3 and enhances its translocation to the nucleus. Interacts (via KH domain) with MDM2 and TP53. Interacts with TRADD. Interacts with CRY1. Methylation by PRMT1 is required for import into the nucleolus and for ribosome assembly. Post-translationally, sumoylation by SUMO1 enhances protein stability through increased resistance to proteolysis. Sumoylation occurs at one or more of the three consensus sites, Lys-18, Lys-214 and Lys-230. In terms of processing, phosphorylation at Thr-221 by CDK1 occurs mainly in G2/M phase. Phosphorylation by PRKCD occurs on a non-ribosomal-associated form which results in translocation of RPS3 to the nucleus and enhances its endonuclease activity. Phosphorylated on Ser-209 by IKKB in response to activation of the NF-kappa-B p65-p50 complex which enhances the association of RPS3 with importin-alpha and mediates the nuclear translocation of RPS3. Phosphorylation by MAPK is required for translocation to the nucleus following exposure of cells to DNA damaging agents such as hydrogen peroxide. Phosphorylation by PKB/AKT mediates RPS3 nuclear translocation, enhances RPS3 endonuclease activity and suppresses RPS3-induced neuronal apoptosis. Ubiquitinated; ubiquitination is prevented by interaction with HSP90 which stabilizes the protein. Monoubiquitinated at Lys-214 by RNF10 and ZNF598 when a ribosome has stalled during translation of poly(A) sequences, leading to preclude synthesis of a long poly-lysine tail and initiate the ribosome quality control (RQC) pathway to degrade the potentially detrimental aberrant nascent polypeptide. Deubiquitinated at Lys-214 by USP10, preventing degradation by the proteasome and promoting 40S ribosome subunit recycling following ribosome dissociation. Post-translationally, ufmylated by UFL1.

The protein resides in the cytoplasm. It localises to the nucleus. Its subcellular location is the nucleolus. It is found in the mitochondrion inner membrane. The protein localises to the cytoskeleton. The protein resides in the spindle. The enzyme catalyses 2'-deoxyribonucleotide-(2'-deoxyribose 5'-phosphate)-2'-deoxyribonucleotide-DNA = a 3'-end 2'-deoxyribonucleotide-(2,3-dehydro-2,3-deoxyribose 5'-phosphate)-DNA + a 5'-end 5'-phospho-2'-deoxyribonucleoside-DNA + H(+). In terms of biological role, component of the small ribosomal subunit. The ribosome is a large ribonucleoprotein complex responsible for the synthesis of proteins in the cell. Has endonuclease activity and plays a role in repair of damaged DNA. Cleaves phosphodiester bonds of DNAs containing altered bases with broad specificity and cleaves supercoiled DNA more efficiently than relaxed DNA. Displays high binding affinity for 7,8-dihydro-8-oxoguanine (8-oxoG), a common DNA lesion caused by reactive oxygen species (ROS). Has also been shown to bind with similar affinity to intact and damaged DNA. Stimulates the N-glycosylase activity of the base excision protein OGG1. Enhances the uracil excision activity of UNG1. Also stimulates the cleavage of the phosphodiester backbone by APEX1. When located in the mitochondrion, reduces cellular ROS levels and mitochondrial DNA damage. Has also been shown to negatively regulate DNA repair in cells exposed to hydrogen peroxide. Plays a role in regulating transcription as part of the NF-kappa-B p65-p50 complex where it binds to the RELA/p65 subunit, enhances binding of the complex to DNA and promotes transcription of target genes. Represses its own translation by binding to its cognate mRNA. Binds to and protects TP53/p53 from MDM2-mediated ubiquitination. Involved in spindle formation and chromosome movement during mitosis by regulating microtubule polymerization. Involved in induction of apoptosis through its role in activation of CASP8. Induces neuronal apoptosis by interacting with the E2F1 transcription factor and acting synergistically with it to up-regulate pro-apoptotic proteins BCL2L11/BIM and HRK/Dp5. Interacts with TRADD following exposure to UV radiation and induces apoptosis by caspase-dependent JNK activation. This is Small ribosomal subunit protein uS3 (RPS3) from Bos taurus (Bovine).